A 322-amino-acid chain; its full sequence is Putative heme-binding peroxidase (322 aa).

The Proton acceptor role is filled by His38. His162 serves as a coordination point for heme b. The Tryptophan radical intermediate role is filled by Trp178. Residues 288–322 are disordered; the sequence is ISAPKKSNHPTGPAKGAQGGCPVAASQGGCPRAKL.

Belongs to the peroxidase family. Cytochrome c peroxidase subfamily. Heme b serves as cofactor.

Destroys radicals which are normally produced within the cells and which are toxic to biological systems. This is Putative heme-binding peroxidase from Aspergillus fumigatus (strain ATCC MYA-4609 / CBS 101355 / FGSC A1100 / Af293) (Neosartorya fumigata).